The chain runs to 406 residues: Tyrosine--tRNA ligase (406 aa).

Tyr35 provides a ligand contact to L-tyrosine. Positions 40–49 (PTADSLHVGH) match the 'HIGH' region motif. Tyr168 and Gln172 together coordinate L-tyrosine. The 'KMSKS' region signature appears at 228–232 (KMGKT). Position 231 (Lys231) interacts with ATP. One can recognise an S4 RNA-binding domain in the interval 340-404 (SELLDILVEA…RGKKNYNKIV (65 aa)).

The protein belongs to the class-I aminoacyl-tRNA synthetase family. TyrS type 1 subfamily. As to quaternary structure, homodimer.

The protein resides in the cytoplasm. It catalyses the reaction tRNA(Tyr) + L-tyrosine + ATP = L-tyrosyl-tRNA(Tyr) + AMP + diphosphate + H(+). Catalyzes the attachment of tyrosine to tRNA(Tyr) in a two-step reaction: tyrosine is first activated by ATP to form Tyr-AMP and then transferred to the acceptor end of tRNA(Tyr). This is Tyrosine--tRNA ligase from Clostridium perfringens (strain SM101 / Type A).